The chain runs to 112 residues: MTEGEVGVGLLDTSVFIARESGGAIADLPERVALSVMTIGELQLGLLNAGDSATRSRRADTLALARTADQIPVSEAVMISLARLVADCRAAGVRRSVKLTDALIAATAEIKV.

One can recognise a PINc domain in the interval 10-109 (LLDTSVFIAR…TDALIAATAE (100 aa)). 2 residues coordinate Mg(2+): aspartate 12 and aspartate 101.

This sequence belongs to the PINc/VapC protein family. It depends on Mg(2+) as a cofactor.

Functionally, toxic component of a type II toxin-antitoxin (TA) system. An RNase. The cognate antitoxin is VapB8. The protein is Ribonuclease VapC8 (vapC8) of Mycobacterium tuberculosis (strain CDC 1551 / Oshkosh).